A 130-amino-acid chain; its full sequence is Holo-[acyl-carrier-protein] synthase (130 aa).

Residues aspartate 8 and glutamate 62 each contribute to the Mg(2+) site.

It belongs to the P-Pant transferase superfamily. AcpS family. It depends on Mg(2+) as a cofactor.

It is found in the cytoplasm. The enzyme catalyses apo-[ACP] + CoA = holo-[ACP] + adenosine 3',5'-bisphosphate + H(+). Functionally, transfers the 4'-phosphopantetheine moiety from coenzyme A to a Ser of acyl-carrier-protein. This chain is Holo-[acyl-carrier-protein] synthase, found in Acidovorax ebreus (strain TPSY) (Diaphorobacter sp. (strain TPSY)).